Here is a 430-residue protein sequence, read N- to C-terminus: Histone acetyltransferase type B subunit 2 (430 aa).

WD repeat units lie at residues 129–169 (PHDG…ALTT), 180–220 (GHTA…FTSS), 233–273 (RHTD…EEEA), 279–319 (AHSK…QRLH), and 323–363 (GHED…EEQT). Residues 365-369 (EDAED) form an interaction with the histone H4 N-terminus region. Residues 380–420 (GHTNRISEFSWCPNERWVVGSLADDNILQIWSPSRVIWGRD) form a WD 6 repeat. Phosphoserine is present on serine 425.

This sequence belongs to the WD repeat RBAP46/RBAP48/MSI1 family. Component of the HAT-B complex composed of at least hat1 and hat2. The HAT-B complex binds to histone H4 tail. Component of the CENP-A recruiting complex composed of at least mis16, mis19, mis19 and mis20.

It is found in the cytoplasm. Its subcellular location is the nucleus. The protein resides in the chromosome. It localises to the centromere. The protein localises to the kinetochore. Regulatory subunit of the histone acetylase B (HAT-B) complex. The complex acetylates 'Lys-12' of histone H4 which is required for telomeric silencing. Component of the CENP-A recruiting complex that ensures the integrity of mitotic spindles through maintenance of kinetochore factors mis6/CENP-I and cnp1/CENP-A. Maintains the deacetylated state of histones specifically in the central core of the centromeres. The protein is Histone acetyltransferase type B subunit 2 (mis16) of Schizosaccharomyces pombe (strain 972 / ATCC 24843) (Fission yeast).